The primary structure comprises 37 residues: Cytochrome b6-f complex subunit 5 (37 aa).

The chain crosses the membrane as a helical span at residues 5–25 (LLCGIVLGLVPVTIAGLFVTA).

It belongs to the PetG family. In terms of assembly, the 4 large subunits of the cytochrome b6-f complex are cytochrome b6, subunit IV (17 kDa polypeptide, PetD), cytochrome f and the Rieske protein, while the 4 small subunits are PetG, PetL, PetM and PetN. The complex functions as a dimer.

The protein localises to the plastid. It localises to the chloroplast thylakoid membrane. In terms of biological role, component of the cytochrome b6-f complex, which mediates electron transfer between photosystem II (PSII) and photosystem I (PSI), cyclic electron flow around PSI, and state transitions. PetG is required for either the stability or assembly of the cytochrome b6-f complex. The polypeptide is Cytochrome b6-f complex subunit 5 (Chlamydomonas reinhardtii (Chlamydomonas smithii)).